Reading from the N-terminus, the 56-residue chain is Large ribosomal subunit protein bL32 (56 aa).

This sequence belongs to the bacterial ribosomal protein bL32 family.

The polypeptide is Large ribosomal subunit protein bL32 (Edwardsiella ictaluri (strain 93-146)).